Reading from the N-terminus, the 164-residue chain is R-phycoerythrin alpha chain (164 aa).

(2R,3E)-phycoerythrobilin-binding residues include C82 and C139.

This sequence belongs to the phycobiliprotein family. Heterodimer of an alpha and a beta chain. In terms of processing, contains two covalently linked bilin chromophores.

The protein resides in the plastid. The protein localises to the chloroplast thylakoid membrane. Functionally, light-harvesting photosynthetic bile pigment-protein from the phycobiliprotein complex. This Porphyra purpurea (Red seaweed) protein is R-phycoerythrin alpha chain (cpeA).